The following is a 217-amino-acid chain: uncharacterized protein (217 aa).

Helical transmembrane passes span Leu151–Phe171 and Ile177–Phe197.

The protein localises to the mitochondrion membrane. This is an uncharacterized protein from Schizosaccharomyces pombe (strain 972 / ATCC 24843) (Fission yeast).